A 324-amino-acid chain; its full sequence is NADH-ubiquinone oxidoreductase chain 1 (324 aa).

9 helical membrane-spanning segments follow: residues 9 to 29, 43 to 63, 77 to 97, 106 to 126, 146 to 166, 177 to 197, 228 to 248, 259 to 279, and 299 to 319; these read LINP…LTLI, PNIV…KLFI, FLAT…PLPL, LGLL…LGSG, ISYE…AGGF, TIWL…STLA, LFFL…VILF, QISS…FLWI, and FLPL…ATTS.

It belongs to the complex I subunit 1 family.

It is found in the mitochondrion inner membrane. It catalyses the reaction a ubiquinone + NADH + 5 H(+)(in) = a ubiquinol + NAD(+) + 4 H(+)(out). In terms of biological role, core subunit of the mitochondrial membrane respiratory chain NADH dehydrogenase (Complex I) that is believed to belong to the minimal assembly required for catalysis. Complex I functions in the transfer of electrons from NADH to the respiratory chain. The immediate electron acceptor for the enzyme is believed to be ubiquinone. The chain is NADH-ubiquinone oxidoreductase chain 1 (MT-ND1) from Scyliorhinus canicula (Small-spotted catshark).